The chain runs to 149 residues: Transcriptional repressor NrdR (149 aa).

Residues 3–34 (CPFCSHLETQVIETRVFEDAASIRRRRQCAAC) fold into a zinc finger. The ATP-cone domain occupies 49 to 139 (PAVVKKDGRR…VYRSFEGIDD (91 aa)).

Belongs to the NrdR family. Zn(2+) serves as cofactor.

Negatively regulates transcription of bacterial ribonucleotide reductase nrd genes and operons by binding to NrdR-boxes. In Verminephrobacter eiseniae (strain EF01-2), this protein is Transcriptional repressor NrdR.